The following is a 468-amino-acid chain: Glutamate--tRNA ligase 2 (468 aa).

The 'HIGH' region signature appears at 13–23 (PSPTGYLHIGG). The 'KMSKS' region motif lies at 241–245 (KLSKR). K244 is an ATP binding site.

This sequence belongs to the class-I aminoacyl-tRNA synthetase family. Glutamate--tRNA ligase type 1 subfamily. As to quaternary structure, monomer.

Its subcellular location is the cytoplasm. It catalyses the reaction tRNA(Glu) + L-glutamate + ATP = L-glutamyl-tRNA(Glu) + AMP + diphosphate. Catalyzes the attachment of glutamate to tRNA(Glu) in a two-step reaction: glutamate is first activated by ATP to form Glu-AMP and then transferred to the acceptor end of tRNA(Glu). In Paracoccus denitrificans (strain Pd 1222), this protein is Glutamate--tRNA ligase 2.